The sequence spans 529 residues: Type I restriction enzyme StySJI methylase subunit (529 aa).

S-adenosyl-L-methionine is bound by residues 148 to 153, 178 to 180, and glutamate 216; these read QYFTPR and TAG. The interval 405-444 is disordered; that stretch reads YGEDPHGLSPREEGEWSFNAEESEVADSEENKNTDQHQAT. Positions 407 to 418 are enriched in basic and acidic residues; the sequence is EDPHGLSPREEG.

This sequence belongs to the N(4)/N(6)-methyltransferase family. In terms of assembly, the type I restriction/modification system is composed of three polypeptides R, M and S; the restriction enzyme has stoichiometry R(2)M(2)S(1) while the methyltransferase is M(2)S(1).

It catalyses the reaction a 2'-deoxyadenosine in DNA + S-adenosyl-L-methionine = an N(6)-methyl-2'-deoxyadenosine in DNA + S-adenosyl-L-homocysteine + H(+). Its function is as follows. The subtype gamma methyltransferase (M) subunit of a type I restriction enzyme. The M and S subunits together form a methyltransferase (MTase) that methylates two adenine residues of the sequence 5'-GAGN(6)GTRC-3'. In the presence of the R subunit the complex can also act as an endonuclease, binding to the same target sequence but cutting the DNA some distance from this site. Whether the DNA is cut or modified depends on the methylation state of the target sequence. When the target site is unmodified, the DNA is cut. When the target site is hemimethylated, the complex acts as a maintenance MTase modifying the DNA so that both strands become methylated. After locating a non-methylated recognition site, the enzyme complex serves as a molecular motor that translocates DNA in an ATP-dependent manner until a collision occurs that triggers cleavage. This chain is Type I restriction enzyme StySJI methylase subunit, found in Salmonella typhimurium (strain LT2 / SGSC1412 / ATCC 700720).